A 175-amino-acid chain; its full sequence is Probable DNA-directed RNA polymerase subunit delta (175 aa).

Residues 14-81 (CSMIEVVHSV…GENRWGLRSW (68 aa)) enclose the HTH HARE-type domain. Residues 91–175 (ILPQPKPKKK…DETEEEEEEL (85 aa)) are disordered. Over residues 106–175 (DGFDDYIEED…DETEEEEEEL (70 aa)) the composition is skewed to acidic residues.

This sequence belongs to the RpoE family. In terms of assembly, RNAP is composed of a core of 2 alpha, a beta and a beta' subunits. The core is associated with a delta subunit and one of several sigma factors.

In terms of biological role, participates in both the initiation and recycling phases of transcription. In the presence of the delta subunit, RNAP displays an increased specificity of transcription, a decreased affinity for nucleic acids, and an increased efficiency of RNA synthesis because of enhanced recycling. The chain is Probable DNA-directed RNA polymerase subunit delta from Bacillus anthracis.